The sequence spans 500 residues: Potassium/proton antiporter CemA (500 aa).

The helical transmembrane segment at 129-149 threads the bilayer; the sequence is LFLTTIKTIFILFFVPFLVNF. The interval 204–354 is insert; it reads HQTHRDSKPL…GSLDSIKNKD (151 aa). 3 consecutive transmembrane segments (helical) span residues 378 to 398, 425 to 445, and 461 to 481; these read ITNF…LITL, ILLI…ELFF, and IFLL…YLIF.

It belongs to the CemA family.

The protein resides in the plastid. Its subcellular location is the chloroplast inner membrane. The catalysed reaction is K(+)(in) + H(+)(out) = K(+)(out) + H(+)(in). In terms of biological role, contributes to K(+)/H(+) antiport activity by supporting proton efflux to control proton extrusion and homeostasis in chloroplasts in a light-dependent manner to modulate photosynthesis. Prevents excessive induction of non-photochemical quenching (NPQ) under continuous-light conditions. Indirectly promotes efficient inorganic carbon uptake into chloroplasts. The chain is Potassium/proton antiporter CemA from Chlamydomonas reinhardtii (Chlamydomonas smithii).